We begin with the raw amino-acid sequence, 90 residues long: MLDSIPLFPGLPGGPELLIVLLIVVLLFGANKLPQLARSSGQAMGEFRRGREEIEEELKKGAEGGDDEGENGDEAEADDADATETEAESR.

Residues phenylalanine 8–phenylalanine 28 form a helical membrane-spanning segment. The interval serine 39–arginine 90 is disordered. Basic and acidic residues predominate over residues glutamate 46 to glutamate 63. Positions glycine 64–arginine 90 are enriched in acidic residues.

The protein belongs to the TatA/E family. Forms a complex with TatC. Cytoplasmic and membrane-bound TatA form high-molecular-weight complexes.

It localises to the cell membrane. Its subcellular location is the cytoplasm. Functionally, part of the twin-arginine translocation (Tat) system that transports large folded proteins containing a characteristic twin-arginine motif in their signal peptide across membranes. TatA could form the protein-conducting channel of the Tat system. The sequence is that of Sec-independent protein translocase protein TatAo from Haloferax volcanii (strain ATCC 29605 / DSM 3757 / JCM 8879 / NBRC 14742 / NCIMB 2012 / VKM B-1768 / DS2) (Halobacterium volcanii).